Consider the following 926-residue polypeptide: Alanine--tRNA ligase (926 aa).

Zn(2+) contacts are provided by histidine 615, histidine 619, cysteine 719, and histidine 723. Positions 887 to 910 are disordered; the sequence is RVGGGGGGPPDFAQGGGPDADALD. Residues 888–904 show a composition bias toward gly residues; sequence VGGGGGGPPDFAQGGGP.

Belongs to the class-II aminoacyl-tRNA synthetase family. Zn(2+) serves as cofactor.

Its subcellular location is the cytoplasm. The catalysed reaction is tRNA(Ala) + L-alanine + ATP = L-alanyl-tRNA(Ala) + AMP + diphosphate. Its function is as follows. Catalyzes the attachment of alanine to tRNA(Ala) in a two-step reaction: alanine is first activated by ATP to form Ala-AMP and then transferred to the acceptor end of tRNA(Ala). Also edits incorrectly charged Ser-tRNA(Ala) and Gly-tRNA(Ala) via its editing domain. This Halorubrum lacusprofundi (strain ATCC 49239 / DSM 5036 / JCM 8891 / ACAM 34) protein is Alanine--tRNA ligase.